The following is a 125-amino-acid chain: Large ribosomal subunit protein bL20 (125 aa).

It belongs to the bacterial ribosomal protein bL20 family.

Its function is as follows. Binds directly to 23S ribosomal RNA and is necessary for the in vitro assembly process of the 50S ribosomal subunit. It is not involved in the protein synthesizing functions of that subunit. The sequence is that of Large ribosomal subunit protein bL20 from Rhizorhabdus wittichii (strain DSM 6014 / CCUG 31198 / JCM 15750 / NBRC 105917 / EY 4224 / RW1) (Sphingomonas wittichii).